A 194-amino-acid chain; its full sequence is Fe/S biogenesis protein NfuA (194 aa).

[4Fe-4S] cluster is bound by residues C152 and C155.

Belongs to the NfuA family. Homodimer. It depends on [4Fe-4S] cluster as a cofactor.

Its function is as follows. Involved in iron-sulfur cluster biogenesis. Binds a 4Fe-4S cluster, can transfer this cluster to apoproteins, and thereby intervenes in the maturation of Fe/S proteins. Could also act as a scaffold/chaperone for damaged Fe/S proteins. The sequence is that of Fe/S biogenesis protein NfuA from Pseudomonas fluorescens (strain SBW25).